The sequence spans 289 residues: Protoheme IX farnesyltransferase 2 (289 aa).

The next 9 helical transmembrane spans lie at 13–33 (LEIT…VPGS), 37–57 (IYDL…ASIF), 86–106 (LFFI…FILL), 109–129 (VTSA…TIIL), 137–157 (IVIG…SITG), 159–179 (VSAT…THFW), 207–227 (EFWI…PLFI), 232–252 (VGLL…YYVA), and 267–287 (AFHF…LILV).

This sequence belongs to the UbiA prenyltransferase family. Protoheme IX farnesyltransferase subfamily.

It is found in the cell membrane. It carries out the reaction heme b + (2E,6E)-farnesyl diphosphate + H2O = Fe(II)-heme o + diphosphate. It participates in porphyrin-containing compound metabolism; heme O biosynthesis; heme O from protoheme: step 1/1. Functionally, converts heme B (protoheme IX) to heme O by substitution of the vinyl group on carbon 2 of heme B porphyrin ring with a hydroxyethyl farnesyl side group. The sequence is that of Protoheme IX farnesyltransferase 2 from Picrophilus torridus (strain ATCC 700027 / DSM 9790 / JCM 10055 / NBRC 100828 / KAW 2/3).